Reading from the N-terminus, the 1126-residue chain is Formin-B (1126 aa).

Residues 1 to 21 (MFFKGKKKDKEKEKSHGNIGN) form a disordered region. The 369-residue stretch at 38–406 (EQNLSNEDLK…LILKDPSKES (369 aa)) folds into the GBD/FH3 domain. Low complexity predominate over residues 427–447 (LNNSNNNNNNNNSNNNNNDSN). The interval 427–462 (LNNSNNNNNNNNSNNNNNDSNVSTPNINTGSPLLPP) is disordered. Residues 448 to 462 (VSTPNINTGSPLLPP) show a composition bias toward polar residues. Positions 463–514 (QQYQDLEQKLQLTQNEKNESQNKVKQLESEIKGLNSTLTGLQLKVTKLEADL) form a coiled coil. Residues 518 to 532 (SVTTPPSDTNGTTSP) show a composition bias toward polar residues. Disordered stretches follow at residues 518-619 (SVTT…SVPS) and 1004-1078 (ARKK…QNGT). Positions 527–611 (NGTTSPPIEA…PGAPAVPNLP (85 aa)) constitute an FH1 domain. Over residues 543–597 (GAPPPPPPPPPAPPVSGGGPPPPPPPPPPSSGGGPPPPPPPPSSGGPPPPPPPPG) the composition is skewed to pro residues. 3 stretches are compositionally biased toward low complexity: residues 598–607 (GMKKPGAPAV), 1009–1022 (AASG…SGSS), and 1032–1064 (SPIT…QQQQ). The region spanning 612–1011 (PKKSSVPSVK…LAARKKAAAS (400 aa)) is the FH2 domain. Residues 980–1010 (KFKNEFKRTIESIQKERENVQKLAARKKAAA) are a coiled coil. One can recognise a DAD domain in the interval 1071 to 1100 (DDIPQNGTFMDQLMSKMKGGEAIRASRRAS).

It belongs to the formin homology family. Diaphanous subfamily. In terms of assembly, interacts (via GBD/FH3 domain) with activated Rho-GTPases. Interacts with pfyA and pfyB.

Its function is as follows. Formins play an important role in the nucleation of actin and the formation of linear actin filaments. This chain is Formin-B (forB), found in Dictyostelium discoideum (Social amoeba).